Here is a 1045-residue protein sequence, read N- to C-terminus: FERM, ARHGEF and pleckstrin domain-containing protein 1 (1045 aa).

The tract at residues 1-37 (MGEIEQRPTPGSRLGAPENSGISTLERGQKPPPTPSG) is disordered. Serine 20 and serine 23 each carry phosphoserine. Phosphothreonine is present on threonine 24. The 281-residue stretch at 40–320 (VSIKIQMLDD…EHHAFFRLFE (281 aa)) folds into the FERM domain. Serine 340, serine 373, serine 389, serine 403, serine 418, serine 427, and serine 433 each carry phosphoserine. The interval 392–534 (SASLTFGEGA…TDDEDEGRRK (143 aa)) is disordered. Composition is skewed to polar residues over residues 471–489 (TGSL…NSQG) and 496–511 (VTLS…QASP). Serine 510 and serine 514 each carry phosphoserine. Residues 540 to 730 (KAYFIAKEVS…TEMVAQLHGT (191 aa)) enclose the DH domain. A PH 1 domain is found at 759–856 (EFIRLGSLSK…WVEDIQMAID (98 aa)). Residues serine 833, serine 872, and serine 878 each carry the phosphoserine modification. Residues 866–902 (PEFLASSPPDNKSPDEATAADQESEDDLSASRTSLER) are disordered. Position 883 is a phosphothreonine (threonine 883). Phosphoserine occurs at positions 889, 896, and 899. The PH 2 domain maps to 932-1029 (ENQLSGNLLR…WMEVIRSATS (98 aa)).

As to quaternary structure, interacts with CADM1. Interacts with RAC1.

It localises to the cell membrane. The protein localises to the synapse. The protein resides in the synaptosome. It is found in the cytoplasm. Its subcellular location is the cytosol. It localises to the cell projection. The protein localises to the filopodium. The protein resides in the dendrite. It is found in the dendritic spine. Its function is as follows. Functions as a guanine nucleotide exchange factor for RAC1. May play a role in semaphorin signaling. Plays a role in the assembly and disassembly of dendritic filopodia, the formation of dendritic spines, regulation of dendrite length and ultimately the formation of synapses. The polypeptide is FERM, ARHGEF and pleckstrin domain-containing protein 1 (FARP1) (Pongo abelii (Sumatran orangutan)).